Reading from the N-terminus, the 298-residue chain is Tyrosine recombinase XerC (298 aa).

In terms of domain architecture, Core-binding (CB) spans 2-88; sequence TDLHTDVERY…ALRSFFDWLV (87 aa). One can recognise a Tyr recombinase domain in the interval 109 to 288; the sequence is HLPKNIDVDD…DFQHLASVYD (180 aa). Catalysis depends on residues Arg-148, Lys-172, His-240, Arg-243, and His-266. Residue Tyr-275 is the O-(3'-phospho-DNA)-tyrosine intermediate of the active site.

This sequence belongs to the 'phage' integrase family. XerC subfamily. Forms a cyclic heterotetrameric complex composed of two molecules of XerC and two molecules of XerD, in which XerC interacts with XerD via its C-terminal region, XerD interacts with XerC via its C-terminal region and so on.

Its subcellular location is the cytoplasm. Its activity is regulated as follows. FtsK may regulate the catalytic switch between XerC and XerD in the heterotetrameric complex during the two steps of the recombination process. Its function is as follows. Site-specific tyrosine recombinase, which acts by catalyzing the cutting and rejoining of the recombining DNA molecules. Binds cooperatively to specific DNA consensus sequences that are separated from XerD binding sites by a short central region, forming the heterotetrameric XerC-XerD complex that recombines DNA substrates. The complex is essential to convert dimers of the bacterial chromosome into monomers to permit their segregation at cell division. It also contributes to the segregational stability of plasmids. In the complex XerC specifically exchanges the top DNA strands. This Escherichia coli O127:H6 (strain E2348/69 / EPEC) protein is Tyrosine recombinase XerC.